A 440-amino-acid chain; its full sequence is 5-methylthioadenosine/S-adenosylhomocysteine deaminase (440 aa).

Zn(2+)-binding residues include His-69 and His-71. Residues Glu-98 and His-190 each coordinate substrate. A Zn(2+)-binding site is contributed by His-217. Residues Glu-220 and Asp-305 each contribute to the substrate site. Asp-305 contacts Zn(2+).

The protein belongs to the metallo-dependent hydrolases superfamily. MTA/SAH deaminase family. Requires Zn(2+) as cofactor.

The enzyme catalyses S-adenosyl-L-homocysteine + H2O + H(+) = S-inosyl-L-homocysteine + NH4(+). The catalysed reaction is S-methyl-5'-thioadenosine + H2O + H(+) = S-methyl-5'-thioinosine + NH4(+). Its function is as follows. Catalyzes the deamination of 5-methylthioadenosine and S-adenosyl-L-homocysteine into 5-methylthioinosine and S-inosyl-L-homocysteine, respectively. Is also able to deaminate adenosine. This chain is 5-methylthioadenosine/S-adenosylhomocysteine deaminase, found in Desulfovibrio desulfuricans (strain ATCC 27774 / DSM 6949 / MB).